Here is a 495-residue protein sequence, read N- to C-terminus: ESX-2 secretion system ATPase EccB2 (495 aa).

A helical membrane pass occupies residues 43–63 (LALSMVLVAIAAGWMMLLNVL).

It belongs to the EccB family. Part of the ESX-2 / type VII secretion system (T7SS), which is composed of cytosolic and membrane components.

It localises to the cell membrane. Functionally, an ATPase. The sequence is that of ESX-2 secretion system ATPase EccB2 (eccB2) from Mycobacterium tuberculosis (strain CDC 1551 / Oshkosh).